The chain runs to 81 residues: Cytochrome b559 subunit alpha (81 aa).

The chain crosses the membrane as a helical span at residues 22–36 (VIHSITIPSLFIAGW). His24 contributes to the heme binding site.

The protein belongs to the PsbE/PsbF family. As to quaternary structure, heterodimer of an alpha subunit and a beta subunit. PSII is composed of 1 copy each of membrane proteins PsbA, PsbB, PsbC, PsbD, PsbE, PsbF, PsbH, PsbI, PsbJ, PsbK, PsbL, PsbM, PsbT, PsbX, PsbY, PsbZ, Psb30/Ycf12, at least 3 peripheral proteins of the oxygen-evolving complex and a large number of cofactors. It forms dimeric complexes. Heme b is required as a cofactor.

The protein resides in the plastid. Its subcellular location is the chloroplast thylakoid membrane. Functionally, this b-type cytochrome is tightly associated with the reaction center of photosystem II (PSII). PSII is a light-driven water:plastoquinone oxidoreductase that uses light energy to abstract electrons from H(2)O, generating O(2) and a proton gradient subsequently used for ATP formation. It consists of a core antenna complex that captures photons, and an electron transfer chain that converts photonic excitation into a charge separation. The protein is Cytochrome b559 subunit alpha of Cyanidioschyzon merolae (strain NIES-3377 / 10D) (Unicellular red alga).